The following is a 127-amino-acid chain: Major sperm protein 33 (127 aa).

Ala-2 is subject to N-acetylalanine. The MSP domain occupies 9–126; the sequence is DIQTQPGTKI…RRKNLPIEYN (118 aa).

Sperm.

It localises to the cell projection. Its subcellular location is the pseudopodium. It is found in the cytoplasm. The protein localises to the cytoskeleton. Functionally, central component in molecular interactions underlying sperm crawling. Forms an extensive filament system that extends from sperm villipoda, along the leading edge of the pseudopod. The protein is Major sperm protein 33 (msp-33) of Caenorhabditis elegans.